A 166-amino-acid polypeptide reads, in one-letter code: Cyclin-dependent kinase 4 inhibitor D (166 aa).

Residue Met-1 is modified to N-acetylmethionine. ANK repeat units follow at residues 41 to 69 (FGKTALQVMMFGSPAVALELLKQGASPNV), 73 to 102 (SGTSPVHDAARTGFLDTLKVLVEHGADVNA), 106 to 135 (TGSLPIHLAIREGHSSVVSFLAPESDLHHR), and 138 to 165 (SGLTPLELARQRGAQNLMDILQGHMMIP).

The protein belongs to the CDKN2 cyclin-dependent kinase inhibitor family. As to quaternary structure, interacts with CDK6.

The protein localises to the nucleus. It is found in the cytoplasm. In terms of biological role, interacts strongly with CDK4 and CDK6 and inhibits them. The protein is Cyclin-dependent kinase 4 inhibitor D (Cdkn2d) of Mus musculus (Mouse).